The chain runs to 282 residues: uncharacterized protein (282 aa).

4 helical membrane passes run 130-150, 170-190, 191-211, and 223-243; these read WALLCVGIAQIALGTVQGFGL, STSWSIALGVIMVGAALWPSA, AAGLAGVLTAFVAILTGYVIV, and ILTHLPVVIGAVLAIMVWRSA. Residues 263–282 form a disordered region; the sequence is DNASRGRRRGHLWPTDGSAA.

Its subcellular location is the cell membrane. This is an uncharacterized protein from Mycobacterium tuberculosis (strain CDC 1551 / Oshkosh).